A 515-amino-acid chain; its full sequence is 1-pyrroline-5-carboxylate dehydrogenase (515 aa).

Catalysis depends on residues E286 and C320.

This sequence belongs to the aldehyde dehydrogenase family. RocA subfamily.

It catalyses the reaction L-glutamate 5-semialdehyde + NAD(+) + H2O = L-glutamate + NADH + 2 H(+). Its pathway is amino-acid degradation; L-proline degradation into L-glutamate; L-glutamate from L-proline: step 2/2. The polypeptide is 1-pyrroline-5-carboxylate dehydrogenase (Bacillus mycoides (strain KBAB4) (Bacillus weihenstephanensis)).